The following is a 213-amino-acid chain: 3-isopropylmalate dehydratase small subunit (213 aa).

The protein belongs to the LeuD family. LeuD type 1 subfamily. As to quaternary structure, heterodimer of LeuC and LeuD.

The catalysed reaction is (2R,3S)-3-isopropylmalate = (2S)-2-isopropylmalate. Its pathway is amino-acid biosynthesis; L-leucine biosynthesis; L-leucine from 3-methyl-2-oxobutanoate: step 2/4. Functionally, catalyzes the isomerization between 2-isopropylmalate and 3-isopropylmalate, via the formation of 2-isopropylmaleate. In Neisseria gonorrhoeae (strain ATCC 700825 / FA 1090), this protein is 3-isopropylmalate dehydratase small subunit.